The chain runs to 600 residues: UvrABC system protein C (600 aa).

A GIY-YIG domain is found at 15–100 (NSAGVYQYFN…IKQLHPKYNI (86 aa)). The region spanning 203–238 (SILIKNLEKQMLVLAQNENYEEAAKVRDQIVTIKDL) is the UVR domain.

The protein belongs to the UvrC family. In terms of assembly, interacts with UvrB in an incision complex.

The protein resides in the cytoplasm. Its function is as follows. The UvrABC repair system catalyzes the recognition and processing of DNA lesions. UvrC both incises the 5' and 3' sides of the lesion. The N-terminal half is responsible for the 3' incision and the C-terminal half is responsible for the 5' incision. This chain is UvrABC system protein C, found in Campylobacter jejuni subsp. jejuni serotype O:6 (strain 81116 / NCTC 11828).